A 308-amino-acid chain; its full sequence is Phosphoribosylaminoimidazole-succinocarboxamide synthase (308 aa).

It belongs to the SAICAR synthetase family.

It catalyses the reaction 5-amino-1-(5-phospho-D-ribosyl)imidazole-4-carboxylate + L-aspartate + ATP = (2S)-2-[5-amino-1-(5-phospho-beta-D-ribosyl)imidazole-4-carboxamido]succinate + ADP + phosphate + 2 H(+). It functions in the pathway purine metabolism; IMP biosynthesis via de novo pathway; 5-amino-1-(5-phospho-D-ribosyl)imidazole-4-carboxamide from 5-amino-1-(5-phospho-D-ribosyl)imidazole-4-carboxylate: step 1/2. The protein is Phosphoribosylaminoimidazole-succinocarboxamide synthase of Stenotrophomonas maltophilia (strain R551-3).